The chain runs to 566 residues: CTP synthase (566 aa).

Residues 1–282 are amidoligase domain; sequence MSIKRAQLGG…DAYIIDQLGL (282 aa). Ser-23 lines the CTP pocket. Ser-23 contributes to the UTP binding site. Residues 24–29 and Asp-81 each bind ATP; that span reads SLGKGL. Asp-81 and Glu-156 together coordinate Mg(2+). CTP is bound by residues 163 to 165, 203 to 208, and Lys-239; these read DIE and KTKPTQ. UTP contacts are provided by residues 203 to 208 and Lys-239; that span reads KTKPTQ. The region spanning 308–556 is the Glutamine amidotransferase type-1 domain; sequence TIGLVGKYID…IGAALDRQKA (249 aa). Residue Gly-371 participates in L-glutamine binding. The Nucleophile; for glutamine hydrolysis role is filled by Cys-398. L-glutamine contacts are provided by residues 399–402, Glu-422, and Arg-482; that span reads LGLQ. Residues His-529 and Glu-531 contribute to the active site.

Belongs to the CTP synthase family. Homotetramer.

It catalyses the reaction UTP + L-glutamine + ATP + H2O = CTP + L-glutamate + ADP + phosphate + 2 H(+). The catalysed reaction is L-glutamine + H2O = L-glutamate + NH4(+). It carries out the reaction UTP + NH4(+) + ATP = CTP + ADP + phosphate + 2 H(+). The protein operates within pyrimidine metabolism; CTP biosynthesis via de novo pathway; CTP from UDP: step 2/2. Allosterically activated by GTP, when glutamine is the substrate; GTP has no effect on the reaction when ammonia is the substrate. The allosteric effector GTP functions by stabilizing the protein conformation that binds the tetrahedral intermediate(s) formed during glutamine hydrolysis. Inhibited by the product CTP, via allosteric rather than competitive inhibition. Functionally, catalyzes the ATP-dependent amination of UTP to CTP with either L-glutamine or ammonia as the source of nitrogen. Regulates intracellular CTP levels through interactions with the four ribonucleotide triphosphates. This is CTP synthase from Leifsonia xyli subsp. xyli (strain CTCB07).